The following is a 496-amino-acid chain: Polyamine oxidase 6 (496 aa).

The first 27 residues, 1–27 (MTKPTTMAIFLVLALSIAQLLPSLVAG), serve as a signal peptide directing secretion. Residues glutamate 61 and arginine 69 each coordinate FAD. N-linked (GlcNAc...) asparagine glycans are attached at residues asparagine 103 and asparagine 150. An FAD-binding site is contributed by valine 261. Asparagine 278 carries an N-linked (GlcNAc...) asparagine glycan. An FAD-binding site is contributed by glutamate 454.

This sequence belongs to the flavin monoamine oxidase family. It depends on FAD as a cofactor.

It localises to the secreted. The protein resides in the extracellular space. Its subcellular location is the apoplast. Its pathway is amine and polyamine degradation; spermine degradation. Flavoenzyme involved in polyamine back-conversion. Catalyzes the oxidation of the secondary amino group of polyamines, such as spermine and spermidine. The chain is Polyamine oxidase 6 from Oryza sativa subsp. japonica (Rice).